The chain runs to 513 residues: Xyloglucan 6-xylosyltransferase 4 (513 aa).

Residues methionine 1–threonine 39 lie on the Cytoplasmic side of the membrane. Residues leucine 40–glycine 60 traverse the membrane as a helical; Signal-anchor for type II membrane protein segment. Residues threonine 61–proline 513 lie on the Lumenal side of the membrane. N-linked (GlcNAc...) asparagine glycans are attached at residues asparagine 76, asparagine 110, asparagine 142, asparagine 174, and asparagine 490.

It belongs to the glycosyltransferase 34 family.

The protein localises to the golgi apparatus membrane. The enzyme catalyses Transfers an alpha-D-xylosyl residue from UDP-D-xylose to a glucose residue in xyloglucan, forming an alpha-(1-&gt;6)-D-xylosyl-D-glucose linkage.. Its function is as follows. Xylosyltransferase specific to UDP-D-xylose that accepts cellohexaose as substrate to produce xyloglucan. This is Xyloglucan 6-xylosyltransferase 4 from Arabidopsis thaliana (Mouse-ear cress).